Consider the following 248-residue polypeptide: ATP synthase subunit a (248 aa).

A run of 6 helical transmembrane segments spans residues 27-47 (FTNSSAYMFGTVALIAILMLV), 83-103 (FFPLVFSLFMFIAVSNLIGIV), 113-133 (LIVTVALALLVFFTVLIYGFS), 142-162 (LFVPSGVPIYILPLVVFIEVI), 192-212 (FVAMLGALGVVGWFGAVLPLG), and 215-235 (IALTALELLVAFLQAYVFAIL).

Belongs to the ATPase A chain family. As to quaternary structure, F-type ATPases have 2 components, CF(1) - the catalytic core - and CF(0) - the membrane proton channel. CF(1) has five subunits: alpha(3), beta(3), gamma(1), delta(1), epsilon(1). CF(0) has four main subunits: a, b, b' and c.

Its subcellular location is the cell inner membrane. Key component of the proton channel; it plays a direct role in the translocation of protons across the membrane. The protein is ATP synthase subunit a of Rhodopseudomonas palustris (strain ATCC BAA-98 / CGA009).